The following is a 142-amino-acid chain: uncharacterized protein (142 aa).

This sequence belongs to the IIV-6 115R family.

This is an uncharacterized protein from Invertebrate iridescent virus 3 (IIV-3).